Reading from the N-terminus, the 338-residue chain is Anthranilate phosphoribosyltransferase (338 aa).

5-phospho-alpha-D-ribose 1-diphosphate-binding positions include G81, G84 to D85, S89, N91 to T94, K109 to S117, and A121. G81 is a binding site for anthranilate. Mg(2+) is bound at residue S93. An anthranilate-binding site is contributed by N112. Residue R167 coordinates anthranilate. Mg(2+)-binding residues include D226 and E227.

This sequence belongs to the anthranilate phosphoribosyltransferase family. In terms of assembly, homodimer. It depends on Mg(2+) as a cofactor.

The catalysed reaction is N-(5-phospho-beta-D-ribosyl)anthranilate + diphosphate = 5-phospho-alpha-D-ribose 1-diphosphate + anthranilate. The protein operates within amino-acid biosynthesis; L-tryptophan biosynthesis; L-tryptophan from chorismate: step 2/5. Catalyzes the transfer of the phosphoribosyl group of 5-phosphorylribose-1-pyrophosphate (PRPP) to anthranilate to yield N-(5'-phosphoribosyl)-anthranilate (PRA). The sequence is that of Anthranilate phosphoribosyltransferase from Rhodopseudomonas palustris (strain HaA2).